The primary structure comprises 307 residues: Methionyl-tRNA formyltransferase (307 aa).

Residue 108–111 (SLLP) coordinates (6S)-5,6,7,8-tetrahydrofolate.

Belongs to the Fmt family.

It catalyses the reaction L-methionyl-tRNA(fMet) + (6R)-10-formyltetrahydrofolate = N-formyl-L-methionyl-tRNA(fMet) + (6S)-5,6,7,8-tetrahydrofolate + H(+). Attaches a formyl group to the free amino group of methionyl-tRNA(fMet). The formyl group appears to play a dual role in the initiator identity of N-formylmethionyl-tRNA by promoting its recognition by IF2 and preventing the misappropriation of this tRNA by the elongation apparatus. The chain is Methionyl-tRNA formyltransferase from Xylella fastidiosa (strain M12).